A 277-amino-acid polypeptide reads, in one-letter code: Energy-coupling factor transporter ATP-binding protein EcfA (277 aa).

The 235-residue stretch at 4–238 (LETRDLTHIY…PELLTQTRLD (235 aa)) folds into the ABC transporter domain. 37-44 (GPNGAGKS) is a binding site for ATP.

Belongs to the ABC transporter superfamily. Energy-coupling factor EcfA family. Forms a stable energy-coupling factor (ECF) transporter complex composed of 2 membrane-embedded substrate-binding proteins (S component), 2 ATP-binding proteins (A component) and 2 transmembrane proteins (T component).

It is found in the cell membrane. Functionally, ATP-binding (A) component of a common energy-coupling factor (ECF) ABC-transporter complex. Unlike classic ABC transporters this ECF transporter provides the energy necessary to transport a number of different substrates. In Methanoculleus marisnigri (strain ATCC 35101 / DSM 1498 / JR1), this protein is Energy-coupling factor transporter ATP-binding protein EcfA.